Here is a 412-residue protein sequence, read N- to C-terminus: Argininosuccinate synthase (412 aa).

Residues 10-18 (AYSGGLDTS) and Ala-36 each bind ATP. Residues Tyr-87 and Ser-92 each coordinate L-citrulline. Tyr-87 is modified (phosphotyrosine). Lys-112 bears the N6-acetyllysine mark. Tyr-113 is subject to Phosphotyrosine. Residue 115-123 (SHGATGKGN) participates in ATP binding. 3 residues coordinate L-aspartate: Thr-119, Asn-123, and Asp-124. L-citrulline is bound at residue Asn-123. Arg-127 provides a ligand contact to L-citrulline. An N6-acetyllysine; by CLOCK mark is found at Lys-165 and Lys-176. Phosphoserine is present on residues Ser-177 and Ser-180. 2 residues coordinate L-citrulline: Ser-180 and Ser-189. At Thr-219 the chain carries Phosphothreonine. Residues Glu-270 and Tyr-282 each coordinate L-citrulline.

It belongs to the argininosuccinate synthase family. Type 1 subfamily. In terms of assembly, homotetramer. Interacts with NMRAL1. Interacts with CLOCK; in a circadian manner. Forms tissue-specific complexes with ASL, SLC7A1, HSP90AA1 and nitric oxide synthase NOS1, NOS2 or NOS3; the complex regulates cell-autonomous L-arginine synthesis and citrulline recycling while channeling extracellular L-arginine to nitric oxide synthesis pathway. Acetylated by CLOCK in a circadian manner which negatively regulates its enzyme activity. Deacetylated by histone deacetylases.

Its subcellular location is the cytoplasm. It localises to the cytosol. The enzyme catalyses L-citrulline + L-aspartate + ATP = 2-(N(omega)-L-arginino)succinate + AMP + diphosphate + H(+). It functions in the pathway amino-acid biosynthesis; L-arginine biosynthesis; L-arginine from L-ornithine and carbamoyl phosphate: step 2/3. It participates in nitrogen metabolism; urea cycle; (N(omega)-L-arginino)succinate from L-aspartate and L-citrulline: step 1/1. Functionally, one of the enzymes of the urea cycle, the metabolic pathway transforming neurotoxic amonia produced by protein catabolism into inocuous urea in the liver of ureotelic animals. Catalyzes the formation of arginosuccinate from aspartate, citrulline and ATP and together with ASL it is responsible for the biosynthesis of arginine in most body tissues. Indirectly, may be involved in the control of blood pressure. This chain is Argininosuccinate synthase, found in Rattus norvegicus (Rat).